The primary structure comprises 99 residues: Defensin-A4 (99 aa).

The first 21 residues, 1 to 21, serve as a signal peptide directing secretion; the sequence is MKTLCLLFAVLCLVTWTQARG. A propeptide spanning residues 22–68 is cleaved from the precursor; sequence AEVEENLTAQDGEVDIAGDNGDVQLTLNTDDFESFTLKTLTLGHPRV. 3 cysteine pairs are disulfide-bonded: Cys73–Cys97, Cys75–Cys89, and Cys79–Cys96.

Belongs to the alpha-defensin family. In terms of tissue distribution, lowly expressed in spleen, and expressed at lower levels in kidney and lung.

It localises to the secreted. In terms of biological role, has antimicrobial activity. The sequence is that of Defensin-A4 from Ornithorhynchus anatinus (Duckbill platypus).